The following is a 439-amino-acid chain: MSQAKSNKMGVVQLTILTMVNMMGSGIIMLPTKLAEVGTISIISWLVTAVGSMALAWAFAKCGMFSRKSGGMGGYAEYAFGKSGNFMANYTYGVSLLIANVAIAISAVGYGTELLGASLSPVQIGLATIGVLWICTVANFGGARITGQISSITVWGVIIPVVGLCIIGWFWFSPTLYVDSWNPHHAPFFSAVGSSIAMTLWAFLGLESACANTDVVENPERNVPIAVLGGTLGAAVIYIVSTNVIAGIVPNMELANSTAPFGLAFAQMFTPEVGKVIMALMVMSCCGSLLGWQFTIAQVFKSSSDEGYFPKIFSRVTKVDAPVQGMLTIVIIQSGLALMTISPSLNSQFNVLVNLAVVTNIIPYILSMAALVIIQKVANVPPSKAKVANFVAFVGAMYSFYALYSSGEEAMLYGSIVTFLGWTLYGLVSPRFELKNKHG.

12 consecutive transmembrane segments (helical) span residues 10–30 (GVVQ…IIML), 40–60 (ISII…WAFA), 91–111 (TYGV…VGYG), 114–134 (LLGA…VLWI), 152–172 (ITVW…WFWF), 186–206 (APFF…FLGL), 225–245 (IAVL…TNVI), 276–296 (VIMA…QFTI), 321–341 (APVQ…LMTI), 354–374 (NLAV…LVII), 387–407 (VANF…YSSG), and 410–430 (AMLY…LVSP).

Belongs to the amino acid-polyamine-organocation (APC) superfamily. Basic amino acid/polyamine antiporter (APA) (TC 2.A.3.2) family.

The protein resides in the cell inner membrane. It carries out the reaction putrescine(in) + H(+)(in) = putrescine(out) + H(+)(out). The catalysed reaction is putrescine(in) + L-ornithine(out) = putrescine(out) + L-ornithine(in). Its function is as follows. Catalyzes both the uptake and excretion of putrescine. The uptake of putrescine is dependent on the membrane potential and the excretion involves putrescine-ornithine antiporter activity. The polypeptide is Putrescine transporter PotE (Escherichia coli O6:H1 (strain CFT073 / ATCC 700928 / UPEC)).